We begin with the raw amino-acid sequence, 103 residues long: Spherulin-3A (103 aa).

The N-terminal arm stretch occupies residues 1-13 (MSVCKGVSGNPAK). Beta/gamma crystallin 'Greek key' domains are found at residues 14-55 (GEVF…KVGP) and 57-99 (TKAF…IVAT).

The protein belongs to the beta/gamma-crystallin family.

The protein resides in the cytoplasm. Its function is as follows. Structural protein. This is Spherulin-3A from Physarum polycephalum (Slime mold).